Here is a 325-residue protein sequence, read N- to C-terminus: Cytochrome c biogenesis protein CcsA (325 aa).

The next 8 membrane-spanning stretches (helical) occupy residues 12-32, 45-65, 72-92, 100-120, 145-165, 231-251, 264-281, and 293-313; these read HISF…LLFV, GMII…VFSG, LYES…VPYF, LNTI…SGLL, MILG…ILVI, TISL…VWAN, ETWA…LHTR, and IVAS…NLLG.

It belongs to the CcmF/CycK/Ccl1/NrfE/CcsA family. As to quaternary structure, may interact with Ccs1.

It is found in the plastid. The protein resides in the chloroplast thylakoid membrane. Functionally, required during biogenesis of c-type cytochromes (cytochrome c6 and cytochrome f) at the step of heme attachment. This Glycine max (Soybean) protein is Cytochrome c biogenesis protein CcsA.